A 324-amino-acid polypeptide reads, in one-letter code: NAC domain-containing protein 21/22 (324 aa).

Positions 19 to 171 constitute an NAC domain; that stretch reads LPPGFRFHPK…DWVLCRVFHK (153 aa). The Bipartite nuclear localization signal motif lies at 120-137; that stretch reads RKTLVFYQGRAPRGRKTD.

As to quaternary structure, dimer. Interacts with SINAT5. Ubiquitinated. The interaction with SINAT5 mediate its proteasome-dependent degradation. As to expression, predominantly expressed in the root tip and in lateral root initiation sites. Also detected in expanding cotyledon, and in leaf primordia.

The protein localises to the nucleus. Functionally, transcriptional activator that mediates auxin signaling to promote lateral root development. Activates the expression of two downstream auxin-responsive genes, DBP and AIR3. The chain is NAC domain-containing protein 21/22 (NAC021) from Arabidopsis thaliana (Mouse-ear cress).